Reading from the N-terminus, the 310-residue chain is Ribose-phosphate pyrophosphokinase (310 aa).

ATP contacts are provided by residues 34–36 (DME) and 93–94 (RQ). Mg(2+) is bound by residues His-127 and Asp-167. Lys-190 is an active-site residue. D-ribose 5-phosphate contacts are provided by residues Arg-192, Asp-216, and 220–224 (DSGGT).

The protein belongs to the ribose-phosphate pyrophosphokinase family. Class I subfamily. In terms of assembly, homohexamer. It depends on Mg(2+) as a cofactor.

It is found in the cytoplasm. It catalyses the reaction D-ribose 5-phosphate + ATP = 5-phospho-alpha-D-ribose 1-diphosphate + AMP + H(+). It participates in metabolic intermediate biosynthesis; 5-phospho-alpha-D-ribose 1-diphosphate biosynthesis; 5-phospho-alpha-D-ribose 1-diphosphate from D-ribose 5-phosphate (route I): step 1/1. In terms of biological role, involved in the biosynthesis of the central metabolite phospho-alpha-D-ribosyl-1-pyrophosphate (PRPP) via the transfer of pyrophosphoryl group from ATP to 1-hydroxyl of ribose-5-phosphate (Rib-5-P). The polypeptide is Ribose-phosphate pyrophosphokinase (Granulibacter bethesdensis (strain ATCC BAA-1260 / CGDNIH1)).